The primary structure comprises 255 residues: Imidazole glycerol phosphate synthase subunit HisF (255 aa).

Residues D12 and D131 contribute to the active site.

This sequence belongs to the HisA/HisF family. As to quaternary structure, heterodimer of HisH and HisF.

It is found in the cytoplasm. It catalyses the reaction 5-[(5-phospho-1-deoxy-D-ribulos-1-ylimino)methylamino]-1-(5-phospho-beta-D-ribosyl)imidazole-4-carboxamide + L-glutamine = D-erythro-1-(imidazol-4-yl)glycerol 3-phosphate + 5-amino-1-(5-phospho-beta-D-ribosyl)imidazole-4-carboxamide + L-glutamate + H(+). The protein operates within amino-acid biosynthesis; L-histidine biosynthesis; L-histidine from 5-phospho-alpha-D-ribose 1-diphosphate: step 5/9. In terms of biological role, IGPS catalyzes the conversion of PRFAR and glutamine to IGP, AICAR and glutamate. The HisF subunit catalyzes the cyclization activity that produces IGP and AICAR from PRFAR using the ammonia provided by the HisH subunit. This chain is Imidazole glycerol phosphate synthase subunit HisF, found in Sphingopyxis alaskensis (strain DSM 13593 / LMG 18877 / RB2256) (Sphingomonas alaskensis).